Reading from the N-terminus, the 56-residue chain is 4Fe-4S ferredoxin FdxA (56 aa).

4Fe-4S ferredoxin-type domains lie at 1 to 28 (MAYV…SSGD) and 29 to 56 (DRYV…PVQA). Residues Cys-9, Cys-12, Cys-15, Cys-19, Cys-38, Cys-41, Cys-44, and Cys-48 each contribute to the [4Fe-4S] cluster site.

[4Fe-4S] cluster serves as cofactor.

Ferredoxins are iron-sulfur proteins that transfer electrons in a wide variety of metabolic reactions. The chain is 4Fe-4S ferredoxin FdxA from Gottschalkia acidurici (strain ATCC 7906 / DSM 604 / BCRC 14475 / CIP 104303 / KCTC 5404 / NCIMB 10678 / 9a) (Clostridium acidurici).